Reading from the N-terminus, the 427-residue chain is Transcription termination factor Rho (427 aa).

The Rho RNA-BD domain maps to 55–130 (YFFGEGVLEI…IKIEAINYRP (76 aa)). Residues 173–178 (GKGQRG), 185–190 (KAGKTT), and Arg216 each bind ATP.

The protein belongs to the Rho family. As to quaternary structure, homohexamer. The homohexamer assembles into an open ring structure.

Facilitates transcription termination by a mechanism that involves Rho binding to the nascent RNA, activation of Rho's RNA-dependent ATPase activity, and release of the mRNA from the DNA template. In Thermotoga maritima (strain ATCC 43589 / DSM 3109 / JCM 10099 / NBRC 100826 / MSB8), this protein is Transcription termination factor Rho.